The primary structure comprises 261 residues: Glutamate racemase (261 aa).

Substrate-binding positions include 9 to 10 and 41 to 42; these read DS and YG. Residue Cys73 is the Proton donor/acceptor of the active site. Residue 74 to 75 participates in substrate binding; sequence NT. The active-site Proton donor/acceptor is the Cys179. Residue 180–181 participates in substrate binding; it reads TH.

The protein belongs to the aspartate/glutamate racemases family.

The enzyme catalyses L-glutamate = D-glutamate. It participates in cell wall biogenesis; peptidoglycan biosynthesis. Functionally, provides the (R)-glutamate required for cell wall biosynthesis. The sequence is that of Glutamate racemase from Aliivibrio fischeri (strain MJ11) (Vibrio fischeri).